Consider the following 450-residue polypeptide: Glutamate--tRNA ligase 1 (450 aa).

Residues 7–17 (PSPTGYMHVGN) carry the 'HIGH' region motif. Residues 236–240 (KISKR) carry the 'KMSKS' region motif. Position 239 (Lys-239) interacts with ATP.

It belongs to the class-I aminoacyl-tRNA synthetase family. Glutamate--tRNA ligase type 1 subfamily. As to quaternary structure, monomer.

It is found in the cytoplasm. The enzyme catalyses tRNA(Glu) + L-glutamate + ATP = L-glutamyl-tRNA(Glu) + AMP + diphosphate. Its function is as follows. Catalyzes the attachment of glutamate to tRNA(Glu) in a two-step reaction: glutamate is first activated by ATP to form Glu-AMP and then transferred to the acceptor end of tRNA(Glu). The polypeptide is Glutamate--tRNA ligase 1 (Anaplasma phagocytophilum (strain HZ)).